A 223-amino-acid chain; its full sequence is Ribose-5-phosphate isomerase A (223 aa).

Substrate is bound by residues 26-29 (TGST), 82-85 (DGAD), and 95-98 (KGGG). Glu104 acts as the Proton acceptor in catalysis. Substrate is bound at residue Lys122.

The protein belongs to the ribose 5-phosphate isomerase family. In terms of assembly, homodimer.

It carries out the reaction aldehydo-D-ribose 5-phosphate = D-ribulose 5-phosphate. Its pathway is carbohydrate degradation; pentose phosphate pathway; D-ribose 5-phosphate from D-ribulose 5-phosphate (non-oxidative stage): step 1/1. In terms of biological role, catalyzes the reversible conversion of ribose-5-phosphate to ribulose 5-phosphate. This is Ribose-5-phosphate isomerase A from Streptococcus agalactiae serotype V (strain ATCC BAA-611 / 2603 V/R).